The chain runs to 34 residues: Kappa-theraphotoxin-Sc1a (34 aa).

Intrachain disulfides connect C2–C16, C9–C21, and C15–C28. I34 carries the isoleucine amide modification.

It belongs to the neurotoxin 10 (Hwtx-1) family. 57 (ScTx1) subfamily. Expressed by the venom gland.

Its subcellular location is the secreted. Acts as a gating-modifier to inhibit voltage-gated potassium channels. It inhibits delayed Kv2.1/KCNB1 (IC(50) is 12.7 nM), Kv2.1/Kv9.3 (IC(50) is 7.2 nM) (KCNB1/KCNS3), Kv2.2/KCNB2 (IC(50) is 21.4 nM), and transient Kv4.2/KCND2 (IC(50) is 1.2 nM) channels. This chain is Kappa-theraphotoxin-Sc1a, found in Stromatopelma calceatum (Featherleg baboon tarantula).